A 376-amino-acid chain; its full sequence is Peroxisomal membrane protein PEX27 (376 aa).

In terms of assembly, homooligomer. Interacts with PEX25 and PEX34.

The protein resides in the peroxisome membrane. Required for regulation of peroxisome size and number. Also promotes peroxisome division and biogenesis. This is Peroxisomal membrane protein PEX27 (PEX27) from Saccharomyces cerevisiae (strain ATCC 204508 / S288c) (Baker's yeast).